The primary structure comprises 182 residues: Transcription termination/antitermination protein NusG (182 aa).

In terms of domain architecture, KOW spans 131-163; that stretch reads VGEQVRIKSGPFANQVGEVQEIEADKFKLTVLV.

Belongs to the NusG family.

Functionally, participates in transcription elongation, termination and antitermination. This is Transcription termination/antitermination protein NusG from Staphylococcus carnosus (strain TM300).